The following is a 306-amino-acid chain: Ubiquitin carboxyl-terminal hydrolase RPN11 (306 aa).

The residue at position 1 (Met1) is an N-acetylmethionine. The disordered stretch occupies residues 1–20 (MERLQRLMMNSKVGSADTGR). The MPN domain maps to 27–162 (VYISSIALLK…IDAFRLIDTG (136 aa)). 3 residues coordinate Zn(2+): His109, His111, and Asp122. Residues 109 to 122 (HSHPGFGCWLSSVD) carry the JAMM motif motif.

The protein belongs to the peptidase M67A family. As to quaternary structure, component of the lid subcomplex of the 19S proteasome regulatory particle complex (also named PA700 complex). The 26S proteasome consists of a 20S proteasome core and two 19S regulatory subunits. Interacts directly with RPN8 and STS1. N-acetylated by NAT3.

The enzyme catalyses Thiol-dependent hydrolysis of ester, thioester, amide, peptide and isopeptide bonds formed by the C-terminal Gly of ubiquitin (a 76-residue protein attached to proteins as an intracellular targeting signal).. In terms of biological role, component of the lid subcomplex of the 26S proteasome, a multiprotein complex involved in the ATP-dependent degradation of ubiquitinated proteins. RPN11 is the only catalytically active member of the lid and serves as the essential deubiquitinase of the proteasome. The polypeptide is Ubiquitin carboxyl-terminal hydrolase RPN11 (RPN11) (Saccharomyces cerevisiae (strain ATCC 204508 / S288c) (Baker's yeast)).